A 762-amino-acid polypeptide reads, in one-letter code: cGMP-dependent protein kinase 2 (762 aa).

The segment at methionine 1–leucine 26 is disordered. A lipid anchor (N-myristoyl glycine) is attached at glycine 2. Serine 110 and serine 117 each carry phosphoserine. The tract at residues arginine 118–lysine 138 is disordered. Residues phenylalanine 168 to serine 283 are cGMP-binding, high affinity; cAMP-binding, moderate affinity. 3',5'-cyclic GMP-binding positions include glycine 232–alanine 235, arginine 242–threonine 243, lysine 347, glycine 356–alanine 359, arginine 366–serine 367, aspartate 412, and arginine 415. The tract at residues leucine 286 to histidine 416 is cGMP-binding, high affinity; cAMP-binding, low affinity. Phosphoserine is present on serine 431. A Protein kinase domain is found at leucine 453 to leucine 711. Residues leucine 459–valine 467 and lysine 482 each bind ATP. Aspartate 576 (proton acceptor) is an active-site residue. Phosphothreonine is present on threonine 609. The 51-residue stretch at asparagine 712–phenylalanine 762 folds into the AGC-kinase C-terminal domain. The tract at residues tyrosine 740–phenylalanine 762 is disordered.

Belongs to the protein kinase superfamily. AGC Ser/Thr protein kinase family. cGMP subfamily. In terms of assembly, interacts with GRIA1/GLUR1. Myristoylation mediates membrane localization.

The protein resides in the apical cell membrane. It is found in the cell membrane. The catalysed reaction is L-seryl-[protein] + ATP = O-phospho-L-seryl-[protein] + ADP + H(+). It carries out the reaction L-threonyl-[protein] + ATP = O-phospho-L-threonyl-[protein] + ADP + H(+). With respect to regulation, binding of cGMP results in enzyme activation. In terms of biological role, crucial regulator of intestinal secretion and bone growth. Phosphorylates and activates CFTR on the plasma membrane. Plays a key role in intestinal secretion by regulating cGMP-dependent translocation of CFTR in jejunum. Acts downstream of NMDAR to activate the plasma membrane accumulation of GRIA1/GLUR1 in synapse and increase synaptic plasticity. Phosphorylates GRIA1/GLUR1 at Ser-863. Acts as a regulator of gene expression and activator of the extracellular signal-regulated kinases MAPK3/ERK1 and MAPK1/ERK2 in mechanically stimulated osteoblasts. Under fluid shear stress, mediates ERK activation and subsequent induction of FOS, FOSL1/FRA1, FOSL2/FRA2 and FOSB that play a key role in the osteoblast anabolic response to mechanical stimulation. This is cGMP-dependent protein kinase 2 (Prkg2) from Mus musculus (Mouse).